A 604-amino-acid chain; its full sequence is NRPS-independent siderophore synthetase-like protein ankE (604 aa).

The enzyme catalyses cyclo(L-arginyl-(Z)-dehydro-4-O-homoseryl-tyrosyl) + citrate + ATP = NK13650 B + AMP + diphosphate + H(+). It participates in secondary metabolite biosynthesis. Functionally, NRPS-independent siderophore synthetase-like protein; part of the ank cluster that mediates the biosynthesis of NK13650 C, a highly modified cyclo-arginine-tyrosine dipeptide. AnkE is responsible of the production of NK13650 B via ligation of citrate to the ankD product. Within the pathway, the cyclodipeptide synthase ankA acts as the scaffold-generating enzyme and is responsible for formation of the cyclo-Arg-Tyr diketopiperazine (cRY) from L-Arg and L-Tyr. The ankA product cRY is desaturated by the cytochrome P450 monooxygenase ankB to yield a dehydro-cyclodipeptide intermediate. The FAD-dependent monooxygenase ankC then installs the m-OH, ankD catalyzes the attachment of L-homoserine, and ankE ligates citrate to the ankD product to yield NK13650 B. The O-methyltransferase ankF is responsible for methylation of the C-17 phenol group of NK13650 B to produce NK13650 D. Amidation of NK13650 D with L-Asp by ankG then leads to the production of NK13650 C, whereas amidation of NK13650 B produces NK13650 A. The sequence is that of NRPS-independent siderophore synthetase-like protein ankE from Aspergillus thermomutatus (Neosartorya pseudofischeri).